The chain runs to 269 residues: Tryptophan synthase alpha chain (269 aa).

Active-site proton acceptor residues include Glu49 and Asp60.

It belongs to the TrpA family. Tetramer of two alpha and two beta chains.

The catalysed reaction is (1S,2R)-1-C-(indol-3-yl)glycerol 3-phosphate + L-serine = D-glyceraldehyde 3-phosphate + L-tryptophan + H2O. It participates in amino-acid biosynthesis; L-tryptophan biosynthesis; L-tryptophan from chorismate: step 5/5. Its function is as follows. The alpha subunit is responsible for the aldol cleavage of indoleglycerol phosphate to indole and glyceraldehyde 3-phosphate. The protein is Tryptophan synthase alpha chain of Azotobacter vinelandii (strain DJ / ATCC BAA-1303).